Reading from the N-terminus, the 258-residue chain is UPF0246 protein plu0566 (258 aa).

It belongs to the UPF0246 family.

This Photorhabdus laumondii subsp. laumondii (strain DSM 15139 / CIP 105565 / TT01) (Photorhabdus luminescens subsp. laumondii) protein is UPF0246 protein plu0566.